Reading from the N-terminus, the 116-residue chain is uncharacterized protein (116 aa).

The chain crosses the membrane as a helical span at residues 22 to 42; it reads LIFLVVNLKVPAVGLELFLLV.

Its subcellular location is the membrane. This is an uncharacterized protein from Saccharomyces cerevisiae (strain ATCC 204508 / S288c) (Baker's yeast).